The following is a 175-amino-acid chain: Calcineurin subunit B (175 aa).

EF-hand domains lie at 21-56 (AEIERLKKRFMKLDKDSSGSIDKTEFMSIPGVSANP), 58-88 (AKRIIEVFDEDNSGDVDFQEFITSLSIFSGR), 90-125 (ETDAKLRFAFRIYDIDKDGYISNGELFIVLKIMVGT), and 131-166 (QLQQIVDRTIMENDVDGDGKLSFEEFKKAAETTEVI). Ca(2+)-binding residues include D34, D36, S38, S40, E45, D66, D68, S70, D72, E77, D103, D105, D107, Y109, E114, D144, D146, D148, K150, and E155.

This sequence belongs to the calcineurin regulatory subunit family. Composed of a catalytic subunit (A) and a regulatory subunit (B).

Regulatory subunit of calcineurin, a calcium-dependent, calmodulin stimulated protein phosphatase. Confers calcium sensitivity. This is Calcineurin subunit B (CNB1) from Kluyveromyces lactis (strain ATCC 8585 / CBS 2359 / DSM 70799 / NBRC 1267 / NRRL Y-1140 / WM37) (Yeast).